We begin with the raw amino-acid sequence, 113 residues long: UPF0482 protein YnfB (113 aa).

The N-terminal stretch at 1–28 is a signal peptide; it reads MNYTLSKRLCLTAMLTLAAVVYTTSAFA.

The protein belongs to the UPF0482 family.

This chain is UPF0482 protein YnfB, found in Salmonella arizonae (strain ATCC BAA-731 / CDC346-86 / RSK2980).